The primary structure comprises 338 residues: tRNA N6-adenosine threonylcarbamoyltransferase (338 aa).

H111 and H115 together coordinate Fe cation. Substrate-binding positions include 134–138, D167, G180, and N272; that span reads LVSGG. Residue D300 participates in Fe cation binding.

It belongs to the KAE1 / TsaD family. Fe(2+) serves as cofactor.

It localises to the cytoplasm. The catalysed reaction is L-threonylcarbamoyladenylate + adenosine(37) in tRNA = N(6)-L-threonylcarbamoyladenosine(37) in tRNA + AMP + H(+). In terms of biological role, required for the formation of a threonylcarbamoyl group on adenosine at position 37 (t(6)A37) in tRNAs that read codons beginning with adenine. Is involved in the transfer of the threonylcarbamoyl moiety of threonylcarbamoyl-AMP (TC-AMP) to the N6 group of A37, together with TsaE and TsaB. TsaD likely plays a direct catalytic role in this reaction. This is tRNA N6-adenosine threonylcarbamoyltransferase from Vibrio parahaemolyticus serotype O3:K6 (strain RIMD 2210633).